Consider the following 289-residue polypeptide: MSRLANSAGDWADDEEFDEAASLPPQQVISNKDGTKTVITYRFNDDGKKVKTTRRIRTTVVKEHVNPRVAERKAWAKFGLEKDHAPGPSLDTTSVGENIIFRPSVNWKAQAKEVEKAGGEKGGLKDQLKDKKVKCRICSGEHFTARCPFKDTMAPVDEPTGPTGGDNEDEERPAGALGSGATAYVPPALRKGGSGGEKMAGRYERDELATLRVTNVSELAEEGELRDMFGRFGHVTRVFLAKDKETNMAKGFAFISFADRADAARACEKMDGFGYRHLILRVEFAKKTT.

Disordered stretches follow at residues Met1–Asn31 and Asp151–Met199. Positions Ala209–Lys287 constitute an RRM domain.

It belongs to the eIF-3 subunit G family. In terms of assembly, component of the eukaryotic translation initiation factor 3 (eIF-3) complex.

Its subcellular location is the cytoplasm. In terms of biological role, RNA-binding component of the eukaryotic translation initiation factor 3 (eIF-3) complex, which is involved in protein synthesis of a specialized repertoire of mRNAs and, together with other initiation factors, stimulates binding of mRNA and methionyl-tRNAi to the 40S ribosome. The eIF-3 complex specifically targets and initiates translation of a subset of mRNAs involved in cell proliferation. This subunit can bind 18S rRNA. The chain is Eukaryotic translation initiation factor 3 subunit G from Coccidioides immitis (strain RS) (Valley fever fungus).